We begin with the raw amino-acid sequence, 352 residues long: tRNA pseudouridine synthase D (352 aa).

Catalysis depends on D81, which acts as the Nucleophile. Residues 158–306 form the TRUD domain; sequence GVPNYFGQQR…RHERRTLLLK (149 aa).

Belongs to the pseudouridine synthase TruD family.

It catalyses the reaction uridine(13) in tRNA = pseudouridine(13) in tRNA. In terms of biological role, responsible for synthesis of pseudouridine from uracil-13 in transfer RNAs. The chain is tRNA pseudouridine synthase D from Photobacterium profundum (strain SS9).